The sequence spans 329 residues: Peroxidase 5 (329 aa).

Residues 1–26 (MSSKRVTWLSLTWVLVFLCLSVELEA) form the signal peptide. Gln27 carries the pyrrolidone carboxylic acid modification. Disulfide bonds link Cys37–Cys117, Cys70–Cys75, Cys123–Cys324, and Cys202–Cys234. Residue His68 is the Proton acceptor of the active site. Ca(2+) contacts are provided by Asp69, Val72, Gly74, Asp76, and Ser78. Pro165 serves as a coordination point for substrate. His195 serves as a coordination point for heme b. Thr196 serves as a coordination point for Ca(2+). An N-linked (GlcNAc...) asparagine glycan is attached at Asn213. Residues Ser251 and Asp256 each coordinate Ca(2+).

Belongs to the peroxidase family. Classical plant (class III) peroxidase subfamily. Heme b is required as a cofactor. Requires Ca(2+) as cofactor.

Its subcellular location is the secreted. The enzyme catalyses 2 a phenolic donor + H2O2 = 2 a phenolic radical donor + 2 H2O. Removal of H(2)O(2), oxidation of toxic reductants, biosynthesis and degradation of lignin, suberization, auxin catabolism, response to environmental stresses such as wounding, pathogen attack and oxidative stress. These functions might be dependent on each isozyme/isoform in each plant tissue. In Vitis vinifera (Grape), this protein is Peroxidase 5.